The primary structure comprises 296 residues: Acetyl-coenzyme A carboxylase carboxyl transferase subunit beta (296 aa).

Residues 25-294 (VWTKCTACEQ…PFVEPELISE (270 aa)) form the CoA carboxyltransferase N-terminal domain. Zn(2+)-binding residues include Cys29, Cys32, Cys48, and Cys51. Residues 29 to 51 (CTACEQVLYSEELKRNLYVCPKC) form a C4-type zinc finger.

This sequence belongs to the AccD/PCCB family. Acetyl-CoA carboxylase is a heterohexamer composed of biotin carboxyl carrier protein (AccB), biotin carboxylase (AccC) and two subunits each of ACCase subunit alpha (AccA) and ACCase subunit beta (AccD). The cofactor is Zn(2+).

It is found in the cytoplasm. It carries out the reaction N(6)-carboxybiotinyl-L-lysyl-[protein] + acetyl-CoA = N(6)-biotinyl-L-lysyl-[protein] + malonyl-CoA. It functions in the pathway lipid metabolism; malonyl-CoA biosynthesis; malonyl-CoA from acetyl-CoA: step 1/1. Component of the acetyl coenzyme A carboxylase (ACC) complex. Biotin carboxylase (BC) catalyzes the carboxylation of biotin on its carrier protein (BCCP) and then the CO(2) group is transferred by the transcarboxylase to acetyl-CoA to form malonyl-CoA. The polypeptide is Acetyl-coenzyme A carboxylase carboxyl transferase subunit beta (Haemophilus influenzae (strain 86-028NP)).